Here is a 464-residue protein sequence, read N- to C-terminus: Argininosuccinate lyase (464 aa).

It belongs to the lyase 1 family. Argininosuccinate lyase subfamily.

Its subcellular location is the cytoplasm. It carries out the reaction 2-(N(omega)-L-arginino)succinate = fumarate + L-arginine. The protein operates within amino-acid biosynthesis; L-arginine biosynthesis; L-arginine from L-ornithine and carbamoyl phosphate: step 3/3. The protein is Argininosuccinate lyase of Chlorobium phaeobacteroides (strain DSM 266 / SMG 266 / 2430).